Here is a 177-residue protein sequence, read N- to C-terminus: Adenine phosphoribosyltransferase (177 aa).

Belongs to the purine/pyrimidine phosphoribosyltransferase family. Homodimer.

The protein localises to the cytoplasm. The catalysed reaction is AMP + diphosphate = 5-phospho-alpha-D-ribose 1-diphosphate + adenine. It participates in purine metabolism; AMP biosynthesis via salvage pathway; AMP from adenine: step 1/1. Catalyzes a salvage reaction resulting in the formation of AMP, that is energically less costly than de novo synthesis. This chain is Adenine phosphoribosyltransferase, found in Synechococcus sp. (strain RCC307).